A 185-amino-acid chain; its full sequence is Ubiquitin-fold modifier-conjugating enzyme 1 (185 aa).

The active-site Glycyl thioester intermediate is Cys-119.

It belongs to the ubiquitin-conjugating enzyme family. UFC1 subfamily.

Functionally, E2-like enzyme which forms an intermediate with UFM1 via a thioester linkage. This chain is Ubiquitin-fold modifier-conjugating enzyme 1, found in Oryza sativa subsp. japonica (Rice).